Reading from the N-terminus, the 49-residue chain is Large ribosomal subunit protein eL40 (49 aa).

It belongs to the eukaryotic ribosomal protein eL40 family.

The chain is Large ribosomal subunit protein eL40 from Archaeoglobus fulgidus (strain ATCC 49558 / DSM 4304 / JCM 9628 / NBRC 100126 / VC-16).